A 182-amino-acid polypeptide reads, in one-letter code: Small ribosomal subunit protein uS5 (182 aa).

The 64-residue stretch at 16–79 folds into the S5 DRBM domain; the sequence is FVDRLVHINR…ESAKRGMIYV (64 aa).

The protein belongs to the universal ribosomal protein uS5 family. In terms of assembly, part of the 30S ribosomal subunit. Contacts proteins S4 and S8.

Functionally, with S4 and S12 plays an important role in translational accuracy. Located at the back of the 30S subunit body where it stabilizes the conformation of the head with respect to the body. In Bartonella tribocorum (strain CIP 105476 / IBS 506), this protein is Small ribosomal subunit protein uS5.